Here is a 657-residue protein sequence, read N- to C-terminus: 1-deoxy-D-xylulose-5-phosphate synthase (657 aa).

Thiamine diphosphate-binding positions include H73 and 113–115 (SHA). D145 is a binding site for Mg(2+). Thiamine diphosphate-binding positions include 146–147 (GA), N175, Y293, and E375. N175 is a binding site for Mg(2+).

The protein belongs to the transketolase family. DXPS subfamily. Homodimer. It depends on Mg(2+) as a cofactor. The cofactor is thiamine diphosphate.

The catalysed reaction is D-glyceraldehyde 3-phosphate + pyruvate + H(+) = 1-deoxy-D-xylulose 5-phosphate + CO2. It functions in the pathway metabolic intermediate biosynthesis; 1-deoxy-D-xylulose 5-phosphate biosynthesis; 1-deoxy-D-xylulose 5-phosphate from D-glyceraldehyde 3-phosphate and pyruvate: step 1/1. Catalyzes the acyloin condensation reaction between C atoms 2 and 3 of pyruvate and glyceraldehyde 3-phosphate to yield 1-deoxy-D-xylulose-5-phosphate (DXP). This Renibacterium salmoninarum (strain ATCC 33209 / DSM 20767 / JCM 11484 / NBRC 15589 / NCIMB 2235) protein is 1-deoxy-D-xylulose-5-phosphate synthase.